Reading from the N-terminus, the 160-residue chain is uncharacterized protein (160 aa).

Tyr-49 bears the Phosphotyrosine mark.

May be involved in the assembly, structure, or function of the flagellum. May polymerize to form a filamentous structure that is part of the flagellum. This is an uncharacterized protein from Bacillus subtilis (strain 168).